Here is a 1402-residue protein sequence, read N- to C-terminus: DNA-directed RNA polymerase subunit beta' (1402 aa).

Positions 71, 73, 86, and 89 each coordinate Zn(2+). Mg(2+) is bound by residues Asp-462, Asp-464, and Asp-466. Cys-808, Cys-881, Cys-888, and Cys-891 together coordinate Zn(2+).

Belongs to the RNA polymerase beta' chain family. The RNAP catalytic core consists of 2 alpha, 1 beta, 1 beta' and 1 omega subunit. When a sigma factor is associated with the core the holoenzyme is formed, which can initiate transcription. Mg(2+) is required as a cofactor. The cofactor is Zn(2+).

The catalysed reaction is RNA(n) + a ribonucleoside 5'-triphosphate = RNA(n+1) + diphosphate. DNA-dependent RNA polymerase catalyzes the transcription of DNA into RNA using the four ribonucleoside triphosphates as substrates. In Hyphomonas neptunium (strain ATCC 15444), this protein is DNA-directed RNA polymerase subunit beta'.